The chain runs to 473 residues: MRKLLTNLPAAAVLSAQVYSAVLQGLWEENVCGTPGRTRVCTALLYGQVCPFQDSTDGLRTITSILFNWPPENTSVYYQPPQRSSFRIKLAFRNLSWPGLGLEDHQEIVLGQLVLPEPNEAKPDDPAPRPGQHALTMPALEPAPPLLADLGPALEPESPAALGPPGYLHSAPGPAPAPGEGPPPGTVLEPQSAPESSCPCRGSVKNQPSEELPDMTTFPPRLLAEQLTLMDAELFKKVVLHECLGCIWGQGHLKGNEHMAPTVRATIAHFNRLTNCITTSCLGDHSMRARDRARVVEHWIKVARECLSLNNFSSVHVIVSALCSNPIGQLHKTWAGVSSKSMKELKELCKKDTAVKRDLLIKAGSFKVATQERNPQRVQMRLRRQKKGVVPFLGDFLTELQRLDSAIPDDLDGNTNKRSKEVRVLQEMQLLQVAAMNYRLRPLEKFVTYFTRMEQLSDKESYKLSCQLEPENP.

The segment at 117 to 215 is disordered; the sequence is EPNEAKPDDP…NQPSEELPDM (99 aa). Positions 134–157 are enriched in low complexity; that stretch reads ALTMPALEPAPPLLADLGPALEPE. Pro residues predominate over residues 173–185; it reads GPAPAPGEGPPPG. Residues 219 to 471 enclose the Ras-GEF domain; it reads PPRLLAEQLT…YKLSCQLEPE (253 aa).

The protein localises to the cytoplasmic vesicle. The protein is Ral-GDS-related protein (RGL4) of Homo sapiens (Human).